A 471-amino-acid chain; its full sequence is Glutamate--tRNA ligase (471 aa).

Residues 9 to 19 carry the 'HIGH' region motif; the sequence is PSPTGYLHVGG. Zn(2+) is bound by residues C98, C100, C125, and H127. Residues 237 to 241 carry the 'KMSKS' region motif; it reads KLSKR. K240 serves as a coordination point for ATP.

Belongs to the class-I aminoacyl-tRNA synthetase family. Glutamate--tRNA ligase type 1 subfamily. As to quaternary structure, monomer. The cofactor is Zn(2+).

The protein localises to the cytoplasm. The enzyme catalyses tRNA(Glu) + L-glutamate + ATP = L-glutamyl-tRNA(Glu) + AMP + diphosphate. Its function is as follows. Catalyzes the attachment of glutamate to tRNA(Glu) in a two-step reaction: glutamate is first activated by ATP to form Glu-AMP and then transferred to the acceptor end of tRNA(Glu). The polypeptide is Glutamate--tRNA ligase (Salmonella paratyphi A (strain ATCC 9150 / SARB42)).